Here is a 332-residue protein sequence, read N- to C-terminus: MDPRSEVLLRQAELFQGPLLIAGAPADDLLGQLPQAQAWTWHAGDQAMLESRFAGRSHYGVEAPEAAFDSAVLFLPKSRELAAYLLNALASRLAGRELYLVGEKRGGIEGAAKQLQAFGKPRKLDSARHCQLWQVTIDQAPQAKPLESLAERFELALEDGPLQVVSLPGVFSHGRLDRGTALLLKHLDGLPGGHMLDFGCGAGVLGATLKRRYPQSRVTLLDVDAFAVAASRLTLAANGLEGEVISGDGIDAAPTELSLILSNPPFHTGVHTNYQASENLLKKSAVHLRKGGEMRLVANSFLRYQPLIEGALGNCQVRDEADGFRIYQATRG.

The protein belongs to the methyltransferase superfamily. RsmC family. As to quaternary structure, monomer.

The protein localises to the cytoplasm. It catalyses the reaction guanosine(1207) in 16S rRNA + S-adenosyl-L-methionine = N(2)-methylguanosine(1207) in 16S rRNA + S-adenosyl-L-homocysteine + H(+). Specifically methylates the guanine in position 1207 of 16S rRNA in the 30S particle. This is Ribosomal RNA small subunit methyltransferase C from Pseudomonas putida (strain ATCC 47054 / DSM 6125 / CFBP 8728 / NCIMB 11950 / KT2440).